The following is a 153-amino-acid chain: Phosphopantetheine adenylyltransferase (153 aa).

Substrate is bound at residue Ser-11. Residues 11 to 12 and His-19 contribute to the ATP site; that span reads SF. Residues Lys-43, Thr-75, and Arg-89 each contribute to the substrate site. ATP-binding positions include 90-92, Glu-100, and 124-130; these read GIR and LSFISSS.

The protein belongs to the bacterial CoaD family. As to quaternary structure, homohexamer. Requires Mg(2+) as cofactor.

The protein localises to the cytoplasm. The catalysed reaction is (R)-4'-phosphopantetheine + ATP + H(+) = 3'-dephospho-CoA + diphosphate. It participates in cofactor biosynthesis; coenzyme A biosynthesis; CoA from (R)-pantothenate: step 4/5. In terms of biological role, reversibly transfers an adenylyl group from ATP to 4'-phosphopantetheine, yielding dephospho-CoA (dPCoA) and pyrophosphate. This is Phosphopantetheine adenylyltransferase from Porphyromonas gingivalis (strain ATCC 33277 / DSM 20709 / CIP 103683 / JCM 12257 / NCTC 11834 / 2561).